The sequence spans 347 residues: GDT1-like protein 2, chloroplastic (347 aa).

The transit peptide at 1-12 (MATAISVGVAVP) directs the protein to the chloroplast. Residues 70 to 97 (EAGSHGEHLDSSATRDSNKPTKPPSGSR) form a disordered region. 7 consecutive transmembrane segments (helical) span residues 99 to 119 (PQSI…IVFF), 124 to 144 (SAVV…LIFV), 165 to 185 (ALVL…SVII), 196 to 216 (FQTT…FFGF), 257 to 277 (LTSP…AEWG), 299 to 319 (GAIA…AFLA), and 327 to 347 (VGLI…FGVF).

This sequence belongs to the GDT1 family.

The protein resides in the plastid. It localises to the chloroplast membrane. This is GDT1-like protein 2, chloroplastic from Oryza sativa subsp. japonica (Rice).